The chain runs to 366 residues: Homer protein homolog 1 (366 aa).

The WH1 domain maps to 1 to 110 (MGEQPIFSTR…EKFQEFKEAA (110 aa)). The residue at position 2 (Gly-2) is an N-acetylglycine. Positions 114–189 (KEKSQEKMEL…RTQGLSHASS (76 aa)) are disordered. Residues 138–147 (SPLTPESING) are compositionally biased toward polar residues. Residues 193-364 (KHWEAELATL…LRDNLAKLLE (172 aa)) adopt a coiled-coil conformation. Residues 302 to 366 (KLQEVEIRNK…DNLAKLLECS (65 aa)) form a required for tetramerization region. Ser-318 carries the post-translational modification Phosphoserine.

The protein belongs to the Homer family. As to quaternary structure, tetramer; this tetrameric structure is critical for forming the high-order complex with SHANK1, which in turn is necessary for the structural and functional integrity of dendritic spines. Interacts with GRM1, GRM5, ITPR1, DYN3, RYR1, RYR2 and SHANK3. Interacts with IFT57 and OPHN1. Isoform 1 and isoform 2 encode coiled-coil structures that mediate homo- and heteromultimerization. Interacts with SHANK1; forms high-order polymerized complex with a mesh-like network structure, at least composed of SHANK1, HOMER1 and DLGAP1; the complex formation is SHANK1 multimerization dependent. Interacts with NFATC4. Interacts with DAGLA (via PPXXF motif); this interaction is required for the cell membrane localization of DAGLA. Interacts with SRGAP2. Highly expressed in cortex, Purkinje cells of the cerebellum, hippocampus, striatum and olfactory bulb. Isoform 1 and isoform 3 are expressed in skeletal and cardiac muscle.

The protein localises to the cytoplasm. The protein resides in the postsynaptic density. It localises to the synapse. It is found in the cell projection. Its subcellular location is the dendritic spine. In terms of biological role, postsynaptic density scaffolding protein. Binds and cross-links cytoplasmic regions of GRM1, GRM5, ITPR1, DNM3, RYR1, RYR2, SHANK1 and SHANK3. By physically linking GRM1 and GRM5 with ER-associated ITPR1 receptors, it aids the coupling of surface receptors to intracellular calcium release. May also couple GRM1 to PI3 kinase through its interaction with AGAP2. Differentially regulates the functions of the calcium activated channel ryanodine receptors RYR1 and RYR2. Isoform 1 decreases the activity of RYR2, and increases the activity of RYR1, whereas isoform 3 counteracts the effects by competing for binding sites. Isoform 1 regulates the trafficking and surface expression of GRM5. Isoform 3 acts as a natural dominant negative, in dynamic competition with constitutively expressed isoform 1, and isoform 2 to regulate synaptic metabotropic glutamate function. Isoform 3, may be involved in the structural changes that occur at synapses during long-lasting neuronal plasticity and development. Forms a high-order complex with SHANK1, which in turn is necessary for the structural and functional integrity of dendritic spines. Negatively regulates T cell activation by inhibiting the calcineurin-NFAT pathway. Acts by competing with calcineurin/PPP3CA for NFAT protein binding, hence preventing NFAT activation by PPP3CA. The protein is Homer protein homolog 1 of Rattus norvegicus (Rat).